The primary structure comprises 458 residues: Argininosuccinate lyase (458 aa).

This sequence belongs to the lyase 1 family. Argininosuccinate lyase subfamily.

Its subcellular location is the cytoplasm. It catalyses the reaction 2-(N(omega)-L-arginino)succinate = fumarate + L-arginine. It participates in amino-acid biosynthesis; L-arginine biosynthesis; L-arginine from L-ornithine and carbamoyl phosphate: step 3/3. The chain is Argininosuccinate lyase from Actinobacillus pleuropneumoniae serotype 3 (strain JL03).